A 311-amino-acid chain; its full sequence is Homoserine kinase (311 aa).

88-98 is an ATP binding site; that stretch reads PEGLGLGSSGA.

It belongs to the GHMP kinase family. Homoserine kinase subfamily.

It is found in the cytoplasm. It carries out the reaction L-homoserine + ATP = O-phospho-L-homoserine + ADP + H(+). It functions in the pathway amino-acid biosynthesis; L-threonine biosynthesis; L-threonine from L-aspartate: step 4/5. Catalyzes the ATP-dependent phosphorylation of L-homoserine to L-homoserine phosphate. The sequence is that of Homoserine kinase from Saccharolobus islandicus (strain Y.N.15.51 / Yellowstone #2) (Sulfolobus islandicus).